Here is a 400-residue protein sequence, read N- to C-terminus: Subtilisin-like protease 11 (400 aa).

The signal sequence occupies residues 1-19 (MGLFKVIFTAVAALSAVDA). A propeptide spanning residues 20–117 (AELLSSAKSK…VEHDRHVYIS (98 aa)) is cleaved from the precursor. The Inhibitor I9 domain occupies 35 to 116 (SYLVVMKDSV…FVEHDRHVYI (82 aa)). A Peptidase S8 domain is found at 127–400 (SWGLGRVSHR…NKLLYNGSGK (274 aa)). N-linked (GlcNAc...) asparagine glycosylation occurs at Asn138. Asp159 acts as the Charge relay system in catalysis. Residue Asn181 is glycosylated (N-linked (GlcNAc...) asparagine). His191 functions as the Charge relay system in the catalytic mechanism. Residues Asn252 and Asn337 are each glycosylated (N-linked (GlcNAc...) asparagine). The active-site Charge relay system is the Ser346. 2 N-linked (GlcNAc...) asparagine glycosylation sites follow: Asn388 and Asn396.

Belongs to the peptidase S8 family.

Its subcellular location is the secreted. In terms of biological role, secreted subtilisin-like serine protease with keratinolytic activity that contributes to pathogenicity. In Arthroderma benhamiae (strain ATCC MYA-4681 / CBS 112371) (Trichophyton mentagrophytes), this protein is Subtilisin-like protease 11 (SUB11).